The following is a 325-amino-acid chain: 1-aminocyclopropane-1-carboxylate oxidase 2 (325 aa).

The region spanning Pro-157–Pro-257 is the Fe2OG dioxygenase domain. Positions 181, 183, and 238 each coordinate Fe cation.

It belongs to the iron/ascorbate-dependent oxidoreductase family. Fe cation is required as a cofactor.

The catalysed reaction is 1-aminocyclopropane-1-carboxylate + L-ascorbate + O2 = ethene + L-dehydroascorbate + hydrogen cyanide + CO2 + 2 H2O. Its pathway is alkene biosynthesis; ethylene biosynthesis via S-adenosyl-L-methionine; ethylene from S-adenosyl-L-methionine: step 2/2. The sequence is that of 1-aminocyclopropane-1-carboxylate oxidase 2 (ACO2) from Doritaenopsis sp. (Moth orchid).